The chain runs to 309 residues: Probable manganese-dependent inorganic pyrophosphatase (309 aa).

Mn(2+)-binding residues include His-9, Asp-13, Asp-15, Asp-75, His-97, and Asp-149.

This sequence belongs to the PPase class C family. It depends on Mn(2+) as a cofactor.

Its subcellular location is the cytoplasm. It carries out the reaction diphosphate + H2O = 2 phosphate + H(+). The sequence is that of Probable manganese-dependent inorganic pyrophosphatase from Lactiplantibacillus plantarum (strain ATCC BAA-793 / NCIMB 8826 / WCFS1) (Lactobacillus plantarum).